A 346-amino-acid polypeptide reads, in one-letter code: Elongation factor Ts (346 aa).

Residues 80–83 (TDFV) form an involved in Mg(2+) ion dislocation from EF-Tu region.

The protein belongs to the EF-Ts family.

The protein localises to the cytoplasm. Its function is as follows. Associates with the EF-Tu.GDP complex and induces the exchange of GDP to GTP. It remains bound to the aminoacyl-tRNA.EF-Tu.GTP complex up to the GTP hydrolysis stage on the ribosome. This chain is Elongation factor Ts, found in Streptococcus pyogenes serotype M3 (strain ATCC BAA-595 / MGAS315).